The following is a 178-amino-acid chain: ATP-dependent protease subunit HslV (178 aa).

The active site involves Thr5. Residues Gly161, Cys164, and Thr167 each contribute to the Na(+) site.

The protein belongs to the peptidase T1B family. HslV subfamily. A double ring-shaped homohexamer of HslV is capped on each side by a ring-shaped HslU homohexamer. The assembly of the HslU/HslV complex is dependent on binding of ATP.

It is found in the cytoplasm. It carries out the reaction ATP-dependent cleavage of peptide bonds with broad specificity.. Allosterically activated by HslU binding. Protease subunit of a proteasome-like degradation complex believed to be a general protein degrading machinery. The sequence is that of ATP-dependent protease subunit HslV from Aliarcobacter butzleri (strain RM4018) (Arcobacter butzleri).